We begin with the raw amino-acid sequence, 660 residues long: Bifunctional polymyxin resistance protein ArnA (660 aa).

The formyltransferase ArnAFT stretch occupies residues methionine 1 to leucine 304. Residue histidine 104 is the Proton donor; for formyltransferase activity of the active site. (6R)-10-formyltetrahydrofolate-binding positions include arginine 114 and valine 136–aspartate 140. The interval arginine 314–serine 660 is dehydrogenase ArnADH. NAD(+) is bound by residues aspartate 347 and aspartate 368–isoleucine 369. Residues alanine 393, tyrosine 398, and threonine 432–serine 433 each bind UDP-alpha-D-glucuronate. Glutamate 434 (proton acceptor; for decarboxylase activity) is an active-site residue. UDP-alpha-D-glucuronate-binding positions include arginine 460, asparagine 492, lysine 526–arginine 535, and tyrosine 613. Catalysis depends on arginine 619, which acts as the Proton donor; for decarboxylase activity.

The protein in the N-terminal section; belongs to the Fmt family. UDP-L-Ara4N formyltransferase subfamily. This sequence in the C-terminal section; belongs to the NAD(P)-dependent epimerase/dehydratase family. UDP-glucuronic acid decarboxylase subfamily. Homohexamer, formed by a dimer of trimers.

The enzyme catalyses UDP-alpha-D-glucuronate + NAD(+) = UDP-beta-L-threo-pentopyranos-4-ulose + CO2 + NADH. The catalysed reaction is UDP-4-amino-4-deoxy-beta-L-arabinose + (6R)-10-formyltetrahydrofolate = UDP-4-deoxy-4-formamido-beta-L-arabinose + (6S)-5,6,7,8-tetrahydrofolate + H(+). It functions in the pathway nucleotide-sugar biosynthesis; UDP-4-deoxy-4-formamido-beta-L-arabinose biosynthesis; UDP-4-deoxy-4-formamido-beta-L-arabinose from UDP-alpha-D-glucuronate: step 1/3. Its pathway is nucleotide-sugar biosynthesis; UDP-4-deoxy-4-formamido-beta-L-arabinose biosynthesis; UDP-4-deoxy-4-formamido-beta-L-arabinose from UDP-alpha-D-glucuronate: step 3/3. It participates in bacterial outer membrane biogenesis; lipopolysaccharide biosynthesis. In terms of biological role, bifunctional enzyme that catalyzes the oxidative decarboxylation of UDP-glucuronic acid (UDP-GlcUA) to UDP-4-keto-arabinose (UDP-Ara4O) and the addition of a formyl group to UDP-4-amino-4-deoxy-L-arabinose (UDP-L-Ara4N) to form UDP-L-4-formamido-arabinose (UDP-L-Ara4FN). The modified arabinose is attached to lipid A and is required for resistance to polymyxin and cationic antimicrobial peptides. This Salmonella schwarzengrund (strain CVM19633) protein is Bifunctional polymyxin resistance protein ArnA.